A 306-amino-acid chain; its full sequence is tRNA dimethylallyltransferase (306 aa).

Position 9 to 16 (9 to 16 (GPTAIGKT)) interacts with ATP. 11–16 (TAIGKT) contacts substrate. The interval 34–37 (DSMQ) is interaction with substrate tRNA.

It belongs to the IPP transferase family. As to quaternary structure, monomer. Mg(2+) serves as cofactor.

The catalysed reaction is adenosine(37) in tRNA + dimethylallyl diphosphate = N(6)-dimethylallyladenosine(37) in tRNA + diphosphate. Its function is as follows. Catalyzes the transfer of a dimethylallyl group onto the adenine at position 37 in tRNAs that read codons beginning with uridine, leading to the formation of N6-(dimethylallyl)adenosine (i(6)A). This chain is tRNA dimethylallyltransferase, found in Lactobacillus helveticus (strain DPC 4571).